The following is a 56-amino-acid chain: Large ribosomal subunit protein eL40 (56 aa).

This sequence belongs to the eukaryotic ribosomal protein eL40 family.

This is Large ribosomal subunit protein eL40 from Metallosphaera sedula (strain ATCC 51363 / DSM 5348 / JCM 9185 / NBRC 15509 / TH2).